Consider the following 447-residue polypeptide: GTPase Der (447 aa).

2 consecutive EngA-type G domains span residues 3–167 and 180–353; these read PVVA…HLED and IKLA…KAAN. GTP is bound by residues 9–16, 56–60, 119–122, 186–193, 233–237, and 298–301; these read GRPNVGKS, DTGGF, NKAE, DTAGL, and NKWD. Positions 354–438 constitute a KH-like domain; sequence CKMSTPILTR…PMRIEFKSST (85 aa).

The protein belongs to the TRAFAC class TrmE-Era-EngA-EngB-Septin-like GTPase superfamily. EngA (Der) GTPase family. In terms of assembly, associates with the 50S ribosomal subunit.

GTPase that plays an essential role in the late steps of ribosome biogenesis. This is GTPase Der from Albidiferax ferrireducens (strain ATCC BAA-621 / DSM 15236 / T118) (Rhodoferax ferrireducens).